Consider the following 117-residue polypeptide: MSATLSAYRNALRATKVVFRHDLPILTAARTQIKENIRNNSNLKDTTEIEEAVKKLNDVSKFLISNIVQGEKQDDGKYFLNFHEKTELGDNESIKQGKKNLGSLAGKKGSSIRSCKD.

A mitochondrion-targeting transit peptide spans 1–10 (MSATLSAYRN). A disordered region spans residues 91 to 117 (NESIKQGKKNLGSLAGKKGSSIRSCKD).

It belongs to the complex I LYR family. MZM1 subfamily. In terms of assembly, interacts with RIP1.

The protein localises to the mitochondrion matrix. Functionally, assembly factor required for Rieske Fe-S protein RIP1 incorporation into the cytochrome b-c1 (CIII) complex. Functions as a chaperone, binding to this subunit within the mitochondrial matrix and stabilizing it prior to its translocation and insertion into the late CIII dimeric intermediate within the mitochondrial inner membrane. Modulates the mitochondrial matrix zinc pool. This Candida tropicalis (strain ATCC MYA-3404 / T1) (Yeast) protein is Mitochondrial zinc maintenance protein 1, mitochondrial (MZM1).